We begin with the raw amino-acid sequence, 324 residues long: Beta-ketoacyl-[acyl-carrier-protein] synthase III (324 aa).

Cys112 is a catalytic residue. The tract at residues 181–202 (TDGSRGQNLTSGNNPLRSPFSD) is disordered. Over residues 184–196 (SRGQNLTSGNNPL) the composition is skewed to polar residues. His249 is an active-site residue. Positions 250–254 (QANRR) are ACP-binding. The active site involves Asn279.

This sequence belongs to the thiolase-like superfamily. FabH family. As to quaternary structure, homodimer.

The protein resides in the cytoplasm. The catalysed reaction is malonyl-[ACP] + acetyl-CoA + H(+) = 3-oxobutanoyl-[ACP] + CO2 + CoA. Its pathway is lipid metabolism; fatty acid biosynthesis. In terms of biological role, catalyzes the condensation reaction of fatty acid synthesis by the addition to an acyl acceptor of two carbons from malonyl-ACP. Catalyzes the first condensation reaction which initiates fatty acid synthesis and may therefore play a role in governing the total rate of fatty acid production. Possesses both acetoacetyl-ACP synthase and acetyl transacylase activities. Its substrate specificity determines the biosynthesis of branched-chain and/or straight-chain of fatty acids. This chain is Beta-ketoacyl-[acyl-carrier-protein] synthase III, found in Streptococcus uberis (strain ATCC BAA-854 / 0140J).